Reading from the N-terminus, the 4151-residue chain is Mycoketide-CoA synthase (4151 aa).

The stretch at 2 to 32 (VDQLQHATEALRKALVQVERLKRTNRALLER) forms a coiled coil. A Ketosynthase family 3 (KS3) 1 domain is found at 34-457 (SEPIAIVGMS…GTNAHVIIEA (424 aa)). Module stretches follow at residues 35–2038 (EPIA…RTEL) and 2057–4070 (DPIA…RREL). Cys203 serves as the catalytic Acyl-thioester intermediate; for beta-ketoacyl synthase 1 activity. Residues His338 and His379 each act as for beta-ketoacyl synthase 1 activity in the active site. An acyltransferase 1 region spans residues 559 to 880 (VFVFPGQGSQ…AASAFVAGVA (322 aa)). Ser650 acts as the Acyl-ester intermediate; for acyltransferase 1 activity in catalysis. Residues 926–1048 (HPLLGAVVDL…GILRPGSVEP (123 aa)) form an N-terminal hotdog fold 1 region. A dehydratase 1 region spans residues 926–1194 (HPLLGAVVDL…VARPVTERQL (269 aa)). The region spanning 926-1195 (HPLLGAVVDL…ARPVTERQLL (270 aa)) is the PKS/mFAS DH 1 domain. His958 (proton acceptor; for dehydratase activity 1) is an active-site residue. Residues 1060–1195 (AVTVDVADGY…ARPVTERQLL (136 aa)) are C-terminal hotdog fold 1. The active-site Proton donor; for dehydratase activity 1 is the Asp1120. An enoyl reductase 1 region spans residues 1366-1671 (GTFENLRLEP…QARHTGKVVM (306 aa)). Residues 1680–1858 (GTVLITGGTG…AISLGWGLWD (179 aa)) form a beta-ketoacyl reductase 1 region. The For beta-ketoacyl reductase 1 activity role is filled by Tyr1828. One can recognise a Carrier 1 domain in the interval 1963–2038 (AVLLGLVRLH…RLASYIRTEL (76 aa)). Residue Ser1998 is modified to O-(pantetheine 4'-phosphoryl)serine. Residues 2056–2480 (EDPIAIVGMA…GTNAHVIIEA (425 aa)) enclose the Ketosynthase family 3 (KS3) 2 domain. The Acyl-thioester intermediate; for beta-ketoacyl synthase 2 activity role is filled by Cys2226. Residues His2361 and His2402 each act as for beta-ketoacyl synthase 2 activity in the active site. An acyltransferase 2 region spans residues 2582–2893 (VFVFPGQGSQ…AVAQGFVTGM (312 aa)). Ser2672 (acyl-ester intermediate; for acyltransferase 2 activity) is an active-site residue. The interval 2940-3062 (HALLGAVIDL…GALRAGSAEP (123 aa)) is N-terminal hotdog fold 2. The tract at residues 2940–3215 (HALLGAVIDL…ARPVTDQQLR (276 aa)) is dehydratase 2. The 276-residue stretch at 2940-3215 (HALLGAVIDL…ARPVTDQQLR (276 aa)) folds into the PKS/mFAS DH 2 domain. The active-site Proton acceptor; for dehydratase activity 2 is His2972. The tract at residues 3074–3215 (AVPVEVADGY…ARPVTDQQLR (142 aa)) is C-terminal hotdog fold 2. The active-site Proton donor; for dehydratase activity 2 is the Asp3135. Residues 3395–3701 (GTFENLRLEL…QARHTGKVVM (307 aa)) are enoyl reductase 2. The segment at 3710 to 3888 (GTVLITGGTG…AISLGWGLWD (179 aa)) is beta-ketoacyl reductase 2. Catalysis depends on Tyr3858, which acts as the For beta-ketoacyl reductase 2 activity. Residues 3995–4070 (AVLLDLVRSH…ALAGYMRREL (76 aa)) enclose the Carrier 2 domain. Position 4030 is an O-(pantetheine 4'-phosphoryl)serine (Ser4030).

Forms a large supramolecular assembly mediated through specific interactions between the N- and C-terminus linkers.

The catalysed reaction is a medium-chain fatty acyl-CoA + 5 (S)-methylmalonyl-CoA + 5 malonyl-CoA + 22 NADPH + 32 H(+) = a mycoketide-CoA + 10 CO2 + 22 NADP(+) + 10 CoA + 11 H2O. It functions in the pathway lipid metabolism; fatty acid metabolism. Involved in the synthesis of beta-D-mannosyl phosphomycoketide (MPM), an antigenic mycobacterial polyketide. Binds a fatty acyl-CoA as a starter unit, and extends it by five rounds of alternative additions of malonyl-CoA and methylmalonyl-CoA extender units. Depending on the starter unit, the enzyme forms mycoketide-CoAs of different lengths. Shows preference for small-/medium-chain starter fatty acyl substrates. Uses a hybrid modularly iterative mechanism, by forming a supramolecular assembly to perform repetitive cycles of iterations. This is Mycoketide-CoA synthase from Mycobacterium tuberculosis (strain ATCC 25618 / H37Rv).